Consider the following 530-residue polypeptide: Probable histone-arginine methyltransferase CARMER (530 aa).

The SAM-dependent MTase PRMT-type domain occupies 141–450 (ASQYFQFYGY…QSYDVTIDLH (310 aa)). Q154, R163, G187, E209, E238, and T266 together coordinate S-adenosyl-L-methionine. At R501 the chain carries Asymmetric dimethylarginine; by autocatalysis.

The protein belongs to the class I-like SAM-binding methyltransferase superfamily. Protein arginine N-methyltransferase family. Homodimer. Interacts with EcR. The dimethylated protein is the major form. In terms of tissue distribution, present ubiquitously (at protein level). Expressed in the imaginal disks and in larval brains, and to a much lesser degree in the polytene larval tissue such as salivary glands.

It localises to the cytoplasm. Its subcellular location is the nucleus. It catalyses the reaction L-arginyl-[protein] + 2 S-adenosyl-L-methionine = N(omega),N(omega)-dimethyl-L-arginyl-[protein] + 2 S-adenosyl-L-homocysteine + 2 H(+). In terms of biological role, methylates (mono- and asymmetric dimethylation) the guanidino nitrogens of arginyl residues in proteins. May methylate histone H3 at 'Arg-17' and activate transcription via chromatin remodeling. Coordinates ecdysone-mediated expression of cell death genes. This Drosophila melanogaster (Fruit fly) protein is Probable histone-arginine methyltransferase CARMER (Art4).